The chain runs to 374 residues: Anhydro-N-acetylmuramic acid kinase (374 aa).

Residue 12–19 (GTSLDGVD) participates in ATP binding.

The protein belongs to the anhydro-N-acetylmuramic acid kinase family.

It carries out the reaction 1,6-anhydro-N-acetyl-beta-muramate + ATP + H2O = N-acetyl-D-muramate 6-phosphate + ADP + H(+). Its pathway is amino-sugar metabolism; 1,6-anhydro-N-acetylmuramate degradation. The protein operates within cell wall biogenesis; peptidoglycan recycling. Its function is as follows. Catalyzes the specific phosphorylation of 1,6-anhydro-N-acetylmuramic acid (anhMurNAc) with the simultaneous cleavage of the 1,6-anhydro ring, generating MurNAc-6-P. Is required for the utilization of anhMurNAc either imported from the medium or derived from its own cell wall murein, and thus plays a role in cell wall recycling. In Escherichia fergusonii (strain ATCC 35469 / DSM 13698 / CCUG 18766 / IAM 14443 / JCM 21226 / LMG 7866 / NBRC 102419 / NCTC 12128 / CDC 0568-73), this protein is Anhydro-N-acetylmuramic acid kinase.